The chain runs to 248 residues: Triosephosphate isomerase (248 aa).

A substrate-binding site is contributed by Asn-9–Lys-11. His-94 (electrophile) is an active-site residue. The active-site Proton acceptor is Glu-166. Substrate is bound by residues Gly-172, Ser-211, and Gly-232–Gly-233.

The protein belongs to the triosephosphate isomerase family. As to quaternary structure, homodimer.

Its subcellular location is the cytoplasm. It carries out the reaction D-glyceraldehyde 3-phosphate = dihydroxyacetone phosphate. It functions in the pathway carbohydrate biosynthesis; gluconeogenesis. The protein operates within carbohydrate degradation; glycolysis; D-glyceraldehyde 3-phosphate from glycerone phosphate: step 1/1. In terms of biological role, involved in the gluconeogenesis. Catalyzes stereospecifically the conversion of dihydroxyacetone phosphate (DHAP) to D-glyceraldehyde-3-phosphate (G3P). The chain is Triosephosphate isomerase from Herminiimonas arsenicoxydans.